A 226-amino-acid polypeptide reads, in one-letter code: PKHD-type hydroxylase PLES_48951 (226 aa).

The 101-residue stretch at Lys-78 to Ser-178 folds into the Fe2OG dioxygenase domain. His-96, Asp-98, and His-159 together coordinate Fe cation. 2-oxoglutarate is bound at residue Arg-169.

It depends on Fe(2+) as a cofactor. The cofactor is L-ascorbate.

The polypeptide is PKHD-type hydroxylase PLES_48951 (Pseudomonas aeruginosa (strain LESB58)).